We begin with the raw amino-acid sequence, 306 residues long: Protoheme IX farnesyltransferase (306 aa).

9 consecutive transmembrane segments (helical) span residues 35-55, 61-81, 106-126, 129-149, 157-177, 183-203, 224-244, 245-265, and 286-306; these read LIVFCALIGMVLAVPGVPTWL, LIACAGIWLVAGAAAAFNCLV, LTLAFSAGLCALGSWVLYVWV, LTMWLTFATFVGYAVVYTVIL, IVIGGASGAMPPVLGWAAMTG, ALILFLIIFLWTPPHFWALAL, EFTRLQVFLYTLVLFPACLMP, FIFKMSGWLYLVAAVLLSIGF, and RFSLIHLSALFAALLLDHYLI.

This sequence belongs to the UbiA prenyltransferase family. Protoheme IX farnesyltransferase subfamily.

The protein localises to the cell inner membrane. The catalysed reaction is heme b + (2E,6E)-farnesyl diphosphate + H2O = Fe(II)-heme o + diphosphate. Its pathway is porphyrin-containing compound metabolism; heme O biosynthesis; heme O from protoheme: step 1/1. Converts heme B (protoheme IX) to heme O by substitution of the vinyl group on carbon 2 of heme B porphyrin ring with a hydroxyethyl farnesyl side group. This chain is Protoheme IX farnesyltransferase, found in Polaromonas naphthalenivorans (strain CJ2).